The sequence spans 361 residues: Putative agmatine deiminase (361 aa).

Cysteine 354 functions as the Amidino-cysteine intermediate in the catalytic mechanism.

It belongs to the agmatine deiminase family.

The catalysed reaction is agmatine + H2O = N-carbamoylputrescine + NH4(+). In Streptococcus pneumoniae (strain P1031), this protein is Putative agmatine deiminase.